The sequence spans 357 residues: 3-isopropylmalate dehydrogenase (357 aa).

Residues R97, R107, R135, and D224 each contribute to the substrate site. Residues D224, D248, and D252 each contribute to the Mg(2+) site. 282–294 (GSAPDIAGKNIAN) is a binding site for NAD(+).

It belongs to the isocitrate and isopropylmalate dehydrogenases family. LeuB type 1 subfamily. As to quaternary structure, homodimer. The cofactor is Mg(2+). Mn(2+) is required as a cofactor.

It localises to the cytoplasm. The enzyme catalyses (2R,3S)-3-isopropylmalate + NAD(+) = 4-methyl-2-oxopentanoate + CO2 + NADH. The protein operates within amino-acid biosynthesis; L-leucine biosynthesis; L-leucine from 3-methyl-2-oxobutanoate: step 3/4. Functionally, catalyzes the oxidation of 3-carboxy-2-hydroxy-4-methylpentanoate (3-isopropylmalate) to 3-carboxy-4-methyl-2-oxopentanoate. The product decarboxylates to 4-methyl-2 oxopentanoate. The polypeptide is 3-isopropylmalate dehydrogenase (Prochlorococcus marinus subsp. pastoris (strain CCMP1986 / NIES-2087 / MED4)).